The primary structure comprises 207 residues: Uracil phosphoribosyltransferase (207 aa).

Residues Arg-77, Arg-102, and 129–137 (DPMVATGGS) contribute to the 5-phospho-alpha-D-ribose 1-diphosphate site. Residues Ile-192 and 197–199 (GDA) contribute to the uracil site. Position 198 (Asp-198) interacts with 5-phospho-alpha-D-ribose 1-diphosphate.

Belongs to the UPRTase family. The cofactor is Mg(2+).

The catalysed reaction is UMP + diphosphate = 5-phospho-alpha-D-ribose 1-diphosphate + uracil. It functions in the pathway pyrimidine metabolism; UMP biosynthesis via salvage pathway; UMP from uracil: step 1/1. Allosterically activated by GTP. Functionally, catalyzes the conversion of uracil and 5-phospho-alpha-D-ribose 1-diphosphate (PRPP) to UMP and diphosphate. In Mycobacterium bovis (strain ATCC BAA-935 / AF2122/97), this protein is Uracil phosphoribosyltransferase.